Here is a 120-residue protein sequence, read N- to C-terminus: NAD(P)H-quinone oxidoreductase subunit 3 (120 aa).

Helical transmembrane passes span 7 to 27 (YEYV…ALTA), 64 to 84 (MFAL…PWAV), and 89 to 109 (LGLL…VALV).

This sequence belongs to the complex I subunit 3 family. NDH-1 can be composed of about 15 different subunits; different subcomplexes with different compositions have been identified which probably have different functions.

Its subcellular location is the cellular thylakoid membrane. It carries out the reaction a plastoquinone + NADH + (n+1) H(+)(in) = a plastoquinol + NAD(+) + n H(+)(out). The enzyme catalyses a plastoquinone + NADPH + (n+1) H(+)(in) = a plastoquinol + NADP(+) + n H(+)(out). Its function is as follows. NDH-1 shuttles electrons from an unknown electron donor, via FMN and iron-sulfur (Fe-S) centers, to quinones in the respiratory and/or the photosynthetic chain. The immediate electron acceptor for the enzyme in this species is believed to be plastoquinone. Couples the redox reaction to proton translocation, and thus conserves the redox energy in a proton gradient. Cyanobacterial NDH-1 also plays a role in inorganic carbon-concentration. This chain is NAD(P)H-quinone oxidoreductase subunit 3, found in Crocosphaera subtropica (strain ATCC 51142 / BH68) (Cyanothece sp. (strain ATCC 51142)).